The chain runs to 276 residues: NADPH-dependent 7-cyano-7-deazaguanine reductase (276 aa).

Residue 83 to 85 (VES) participates in substrate binding. Residue 85 to 86 (SK) coordinates NADPH. C184 acts as the Thioimide intermediate in catalysis. D191 (proton donor) is an active-site residue. 223–224 (HE) is a binding site for substrate. 252–253 (RG) is an NADPH binding site.

Belongs to the GTP cyclohydrolase I family. QueF type 2 subfamily. In terms of assembly, homodimer.

It localises to the cytoplasm. The catalysed reaction is 7-aminomethyl-7-carbaguanine + 2 NADP(+) = 7-cyano-7-deazaguanine + 2 NADPH + 3 H(+). It participates in tRNA modification; tRNA-queuosine biosynthesis. Catalyzes the NADPH-dependent reduction of 7-cyano-7-deazaguanine (preQ0) to 7-aminomethyl-7-deazaguanine (preQ1). In Azotobacter vinelandii (strain DJ / ATCC BAA-1303), this protein is NADPH-dependent 7-cyano-7-deazaguanine reductase.